The primary structure comprises 204 residues: uncharacterized protein (204 aa).

Cysteine 52 acts as the Acyl-thioester intermediate in catalysis. Residues histidine 89 and aspartate 104 contribute to the active site.

This sequence belongs to the arylamine N-acetyltransferase family.

This is an uncharacterized protein from Acanthamoeba polyphaga mimivirus (APMV).